Here is a 346-residue protein sequence, read N- to C-terminus: Dihydroorotate dehydrogenase (quinone) (346 aa).

Residues 61–65 (AGLDK) and threonine 85 contribute to the FMN site. Residue lysine 65 coordinates substrate. A substrate-binding site is contributed by 110-114 (NRMGF). FMN is bound by residues asparagine 138 and asparagine 171. Asparagine 171 contributes to the substrate binding site. Serine 174 acts as the Nucleophile in catalysis. Asparagine 176 provides a ligand contact to substrate. Residues lysine 216 and threonine 244 each contribute to the FMN site. Position 245 to 246 (245 to 246 (NT)) interacts with substrate. FMN contacts are provided by residues glycine 267, glycine 296, and 317–318 (YS).

The protein belongs to the dihydroorotate dehydrogenase family. Type 2 subfamily. In terms of assembly, monomer. FMN is required as a cofactor.

The protein resides in the cell membrane. The catalysed reaction is (S)-dihydroorotate + a quinone = orotate + a quinol. It functions in the pathway pyrimidine metabolism; UMP biosynthesis via de novo pathway; orotate from (S)-dihydroorotate (quinone route): step 1/1. Its function is as follows. Catalyzes the conversion of dihydroorotate to orotate with quinone as electron acceptor. The chain is Dihydroorotate dehydrogenase (quinone) from Marinomonas sp. (strain MWYL1).